A 675-amino-acid chain; its full sequence is Heat shock 70 kDa protein, mitochondrial (675 aa).

The transit peptide at 1 to 51 (MAAVLRSLRRRDVASATFSAYRSLTGSTKPAYVAQKWSCLARPFSSRPAGN) directs the protein to the mitochondrion. The disordered stretch occupies residues 638 to 675 (VSKIGEHMSGGSSGGSSAGGSQGGGDQAPEAEYEEVKK). Residues 648 to 663 (GSSGGSSAGGSQGGGD) show a composition bias toward gly residues. Acidic residues predominate over residues 666-675 (PEAEYEEVKK).

The protein belongs to the heat shock protein 70 family.

The protein resides in the mitochondrion. This Phaseolus vulgaris (Kidney bean) protein is Heat shock 70 kDa protein, mitochondrial.